Consider the following 122-residue polypeptide: LYR motif-containing protein 1 (122 aa).

Belongs to the complex I LYR family.

Functionally, may promote cell proliferation and inhibition of apoptosis of preadipocytes. This is LYR motif-containing protein 1 (Lyrm1) from Mus musculus (Mouse).